We begin with the raw amino-acid sequence, 377 residues long: Glutamate 5-kinase (377 aa).

Residue Lys15 participates in ATP binding. Ser56, Asp143, and Asn155 together coordinate substrate. 175–176 (SD) provides a ligand contact to ATP. Residues 281 to 358 (KGTLTIDAGA…PDVLIILGIS (78 aa)) enclose the PUA domain.

This sequence belongs to the glutamate 5-kinase family.

It is found in the cytoplasm. The catalysed reaction is L-glutamate + ATP = L-glutamyl 5-phosphate + ADP. The protein operates within amino-acid biosynthesis; L-proline biosynthesis; L-glutamate 5-semialdehyde from L-glutamate: step 1/2. Catalyzes the transfer of a phosphate group to glutamate to form L-glutamate 5-phosphate. This chain is Glutamate 5-kinase, found in Rhodopseudomonas palustris (strain BisA53).